Consider the following 133-residue polypeptide: ATP synthase epsilon chain (133 aa).

It belongs to the ATPase epsilon chain family. F-type ATPases have 2 components, CF(1) - the catalytic core - and CF(0) - the membrane proton channel. CF(1) has five subunits: alpha(3), beta(3), gamma(1), delta(1), epsilon(1). CF(0) has three main subunits: a, b and c.

The protein localises to the cell membrane. Its function is as follows. Produces ATP from ADP in the presence of a proton gradient across the membrane. In Clostridium botulinum (strain 657 / Type Ba4), this protein is ATP synthase epsilon chain.